An 89-amino-acid chain; its full sequence is Elongation factor 1-beta (89 aa).

This sequence belongs to the EF-1-beta/EF-1-delta family.

Functionally, promotes the exchange of GDP for GTP in EF-1-alpha/GDP, thus allowing the regeneration of EF-1-alpha/GTP that could then be used to form the ternary complex EF-1-alpha/GTP/AAtRNA. This is Elongation factor 1-beta (ef1b) from Methanocaldococcus jannaschii (strain ATCC 43067 / DSM 2661 / JAL-1 / JCM 10045 / NBRC 100440) (Methanococcus jannaschii).